A 256-amino-acid polypeptide reads, in one-letter code: Imidazole glycerol phosphate synthase subunit HisF (256 aa).

Catalysis depends on residues aspartate 12 and aspartate 131.

Belongs to the HisA/HisF family. As to quaternary structure, heterodimer of HisH and HisF.

It is found in the cytoplasm. It carries out the reaction 5-[(5-phospho-1-deoxy-D-ribulos-1-ylimino)methylamino]-1-(5-phospho-beta-D-ribosyl)imidazole-4-carboxamide + L-glutamine = D-erythro-1-(imidazol-4-yl)glycerol 3-phosphate + 5-amino-1-(5-phospho-beta-D-ribosyl)imidazole-4-carboxamide + L-glutamate + H(+). It functions in the pathway amino-acid biosynthesis; L-histidine biosynthesis; L-histidine from 5-phospho-alpha-D-ribose 1-diphosphate: step 5/9. IGPS catalyzes the conversion of PRFAR and glutamine to IGP, AICAR and glutamate. The HisF subunit catalyzes the cyclization activity that produces IGP and AICAR from PRFAR using the ammonia provided by the HisH subunit. This is Imidazole glycerol phosphate synthase subunit HisF from Azotobacter vinelandii (strain DJ / ATCC BAA-1303).